Reading from the N-terminus, the 618-residue chain is MRRDVRILLLGEAQVGKTSLILSLVGEEFPEEVPPRAEEITIPADVTPEKVPTHIVDYSEAEQTDEELREEIHKANVVCVVYDVSEEATIEKIRTKWIPLVNGGTTQGPRVPIILVGNKSDLRSGSSMEAVLPIMSQFPEIETCVECSAKNLRNISELFYYAQKAVLHPTAPLYDPEAKQLRPACAQALTRIFRLSDQDLDQALSDEELNAFQKSCFGHPLAPQALEDVKTVVCRNVAGGVREDRLTLDGFLFLNTLFIQRGRHETTWTILRRFGYSDALELTADYLSPLIHVPPGCSTELNHLGYQFVQRVFEKHDQDRDGALSPVELQSLFSVFPAAPWGPELPRTVRTEAGRLPLHGYLCQWTLVTYLDVRSCLGHLGYLGYPTLCEQDQAHAITVTREKRLDQEKGQTQRSVLLCKVVGARGVGKSAFLQAFLGRGLGHQDTREQPPGYAIDTVQVNGQEKYLILCEVGTDGLLATSLDATCDVACLMFDGSDPKSFAHCASVYKHHYMDGQTPCLFVSSKADLPEGVAVSGPSPAEFCRKHRLPAPVPFSCAGPAEPSTTIFTQLATMAAFPHLVHAELHPSSFWLRGLLGVVGAAVAAVLSFSLYRVLVKSQ.

Residues 1–592 (MRRDVRILLL…ELHPSSFWLR (592 aa)) are Cytoplasmic-facing. Residues 2–168 (RRDVRILLLG…FYYAQKAVLH (167 aa)) enclose the Miro 1 domain. Residues glycine 16, lysine 17, threonine 18, and serine 19 each contribute to the GTP site. Threonine 18 serves as a coordination point for Mg(2+). Proline 35 and aspartate 57 together coordinate Mg(2+). Residue serine 59 participates in GTP binding. Lysine 96 participates in a covalent cross-link: Glycyl lysine isopeptide (Lys-Gly) (interchain with G-Cter in ubiquitin). Positions 118, 119, 121, 149, and 150 each coordinate GTP. A Glycyl lysine isopeptide (Lys-Gly) (interchain with G-Cter in ubiquitin) cross-link involves residue lysine 119. Lysine 164 participates in a covalent cross-link: Glycyl lysine isopeptide (Lys-Gly) (interchain with G-Cter in ubiquitin). 2 consecutive EF-hand domains span residues 184–219 (ACAQALTRIFRLSDQDLDQALSDEELNAFQKSCFGH) and 304–339 (LGYQFVQRVFEKHDQDRDGALSPVELQSLFSVFPAA). Positions 197, 199, 201, 208, 317, 319, 321, and 328 each coordinate Ca(2+). Residues 414–576 (RSVLLCKVVG…FTQLATMAAF (163 aa)) form the Miro 2 domain. Glycine 426, glycine 428, lysine 429, serine 430, and alanine 431 together coordinate GTP. GDP contacts are provided by glycine 426, glycine 428, lysine 429, serine 430, and alanine 431. Serine 430 contacts Mg(2+). Glutamate 471 provides a ligand contact to Mg(2+). Positions 525, 527, and 556 each coordinate GTP. GDP is bound by residues lysine 525, aspartate 527, and cysteine 556. Residues 593–615 (GLLGVVGAAVAAVLSFSLYRVLV) form a helical; Anchor for type IV membrane protein membrane-spanning segment. Topologically, residues 616 to 618 (KSQ) are mitochondrial intermembrane.

It belongs to the mitochondrial Rho GTPase family. As to quaternary structure, homodimer. Interacts with the kinesin-binding proteins TRAK1/OIP106 and TRAK2/GRIF1, forming a link between mitochondria and the trafficking apparatus of the microtubules. Interacts with ARMCX3. Found in a complex with KIF5B, OGT, RHOT1 and TRAK1. Ubiquitinated by PRKN in a PINK1-dependent manner, leading to its degradation. In terms of tissue distribution, ubiquitously expressed. Highly expressed in heart, liver, skeletal muscle, kidney and pancreas.

The protein resides in the mitochondrion outer membrane. It carries out the reaction GTP + H2O = GDP + phosphate + H(+). The catalysed reaction is ATP + H2O = ADP + phosphate + H(+). The enzyme catalyses UTP + H2O = UDP + phosphate + H(+). Atypical mitochondrial nucleoside-triphosphatase (NTPase) involved in mitochondrial trafficking. Probably involved in control of anterograde transport of mitochondria and their subcellular distribution. Can hydrolyze GTP. Can hydrolyze ATP and UTP. This Homo sapiens (Human) protein is Mitochondrial Rho GTPase 2 (RHOT2).